We begin with the raw amino-acid sequence, 454 residues long: Cobyrinate a,c-diamide synthase (454 aa).

A GATase cobBQ-type domain is found at 244–435 (KIAVAYDSAF…VHIHFLSNIA (192 aa)). The Nucleophile role is filled by Cys327.

This sequence belongs to the CobB/CbiA family. The cofactor is Mg(2+).

The catalysed reaction is cob(II)yrinate + 2 L-glutamine + 2 ATP + 2 H2O = cob(II)yrinate a,c diamide + 2 L-glutamate + 2 ADP + 2 phosphate + 2 H(+). Its pathway is cofactor biosynthesis; adenosylcobalamin biosynthesis; cob(II)yrinate a,c-diamide from sirohydrochlorin (anaerobic route): step 10/10. In terms of biological role, catalyzes the ATP-dependent amidation of the two carboxylate groups at positions a and c of cobyrinate, using either L-glutamine or ammonia as the nitrogen source. The protein is Cobyrinate a,c-diamide synthase of Thermoplasma volcanium (strain ATCC 51530 / DSM 4299 / JCM 9571 / NBRC 15438 / GSS1).